Reading from the N-terminus, the 479-residue chain is Alpha,alpha-trehalose-phosphate synthase [UDP-forming] 2 (479 aa).

Y96 and D150 together coordinate D-glucose 6-phosphate. Residues R287 and K292 each coordinate UDP. Residues R287 and K292 each contribute to the UDP-alpha-D-glucose site. Residue R325 coordinates D-glucose 6-phosphate. UDP is bound by residues 363-364 (SV) and 390-394 (LVSFE). 386-394 (DGMNLVSFE) is a UDP-alpha-D-glucose binding site.

It belongs to the glycosyltransferase 20 family.

It catalyses the reaction D-glucose 6-phosphate + UDP-alpha-D-glucose = alpha,alpha-trehalose 6-phosphate + UDP + H(+). It participates in carbohydrate biosynthesis. Its function is as follows. Synthase catalytic subunit of the trehalose synthase complex that catalyzes the production of trehalose from glucose-6-phosphate and UDP-alpha-D-glucose in a two step process. The disaccharide trehalose serves as a storage carbohydrate that is mobilized during conidial germination. Regulates the level of trehalose as a protectant for cell integrity during thermal and oxidative stress. This is Alpha,alpha-trehalose-phosphate synthase [UDP-forming] 2 from Aspergillus fumigatus (strain ATCC MYA-4609 / CBS 101355 / FGSC A1100 / Af293) (Neosartorya fumigata).